A 130-amino-acid chain; its full sequence is Small ribosomal subunit protein uS9 (130 aa).

This sequence belongs to the universal ribosomal protein uS9 family.

The chain is Small ribosomal subunit protein uS9 from Paraburkholderia phytofirmans (strain DSM 17436 / LMG 22146 / PsJN) (Burkholderia phytofirmans).